Reading from the N-terminus, the 723-residue chain is Catalase-peroxidase (723 aa).

A cross-link (tryptophyl-tyrosyl-methioninium (Trp-Tyr) (with M-238)) is located at residues 89–212 (WHSAGTYRTG…LAAVQMGLIY (124 aa)). His90 (proton acceptor) is an active-site residue. The segment at residues 212-238 (YVNPEGPNGDPDPFAAAVDIRETFARM) is a cross-link (tryptophyl-tyrosyl-methioninium (Tyr-Met) (with W-89)). His253 serves as a coordination point for heme b.

The protein belongs to the peroxidase family. Peroxidase/catalase subfamily. In terms of assembly, homodimer or homotetramer. The cofactor is heme b. In terms of processing, formation of the three residue Trp-Tyr-Met cross-link is important for the catalase, but not the peroxidase activity of the enzyme.

It catalyses the reaction H2O2 + AH2 = A + 2 H2O. The enzyme catalyses 2 H2O2 = O2 + 2 H2O. In terms of biological role, bifunctional enzyme with both catalase and broad-spectrum peroxidase activity. The polypeptide is Catalase-peroxidase (Shewanella baltica (strain OS185)).